Here is a 138-residue protein sequence, read N- to C-terminus: Ribosome-binding factor A (138 aa).

Residues 112-138 (EARTQGQAPAADVEPAPGAAPDDEAEE) are disordered. The span at 119–131 (APAADVEPAPGAA) shows a compositional bias: low complexity.

It belongs to the RbfA family. Monomer. Binds 30S ribosomal subunits, but not 50S ribosomal subunits or 70S ribosomes.

It is found in the cytoplasm. In terms of biological role, one of several proteins that assist in the late maturation steps of the functional core of the 30S ribosomal subunit. Associates with free 30S ribosomal subunits (but not with 30S subunits that are part of 70S ribosomes or polysomes). Required for efficient processing of 16S rRNA. May interact with the 5'-terminal helix region of 16S rRNA. This is Ribosome-binding factor A from Anaeromyxobacter sp. (strain K).